A 1255-amino-acid polypeptide reads, in one-letter code: DNA-directed RNA polymerase subunit beta' (1255 aa).

Zn(2+) is bound by residues C60, C62, C77, and C80. Mg(2+) contacts are provided by D503, D505, and D507. C875, C950, C957, and C960 together coordinate Zn(2+).

The protein belongs to the RNA polymerase beta' chain family. The RNAP catalytic core consists of 2 alpha, 1 beta, 1 beta' and 1 omega subunit. When a sigma factor is associated with the core the holoenzyme is formed, which can initiate transcription. It depends on Mg(2+) as a cofactor. Zn(2+) is required as a cofactor.

It carries out the reaction RNA(n) + a ribonucleoside 5'-triphosphate = RNA(n+1) + diphosphate. Its function is as follows. DNA-dependent RNA polymerase catalyzes the transcription of DNA into RNA using the four ribonucleoside triphosphates as substrates. The polypeptide is DNA-directed RNA polymerase subunit beta' (Mycoplasma mycoides subsp. mycoides SC (strain CCUG 32753 / NCTC 10114 / PG1)).